A 136-amino-acid chain; its full sequence is Phosphoribosyl-AMP cyclohydrolase (136 aa).

Asp-89 contributes to the Mg(2+) binding site. Cys-90 is a Zn(2+) binding site. 2 residues coordinate Mg(2+): Asp-91 and Asp-93. The Zn(2+) site is built by Cys-106 and Cys-113.

This sequence belongs to the PRA-CH family. As to quaternary structure, homodimer. Mg(2+) is required as a cofactor. Zn(2+) serves as cofactor.

The protein localises to the cytoplasm. The enzyme catalyses 1-(5-phospho-beta-D-ribosyl)-5'-AMP + H2O = 1-(5-phospho-beta-D-ribosyl)-5-[(5-phospho-beta-D-ribosylamino)methylideneamino]imidazole-4-carboxamide. It functions in the pathway amino-acid biosynthesis; L-histidine biosynthesis; L-histidine from 5-phospho-alpha-D-ribose 1-diphosphate: step 3/9. Catalyzes the hydrolysis of the adenine ring of phosphoribosyl-AMP. The protein is Phosphoribosyl-AMP cyclohydrolase of Bifidobacterium longum subsp. infantis (strain ATCC 15697 / DSM 20088 / JCM 1222 / NCTC 11817 / S12).